Reading from the N-terminus, the 395-residue chain is Flagellin A (395 aa).

The protein belongs to the bacterial flagellin family.

It localises to the secreted. It is found in the bacterial flagellum. Its function is as follows. Flagellin is the subunit protein which polymerizes to form the filaments of bacterial flagella. Homomer of FlaA is able to form a functional filament. The chain is Flagellin A (flaA) from Rhizobium meliloti (Ensifer meliloti).